A 350-amino-acid chain; its full sequence is Small ribosomal subunit biogenesis GTPase RsgA (350 aa).

Residues 1 to 17 are compositionally biased toward polar residues; it reads MSKNKLSKGQQRRVQAN. Positions 1-35 are disordered; that stretch reads MSKNKLSKGQQRRVQANHQRRLRTDRKPELDDSQL. In terms of domain architecture, CP-type G spans 103–273; it reads TSVLTRPDLY…VIDSPGVREF (171 aa). GTP is bound by residues 159–162 and 213–221; these read NKID and GQSGVGKSS. C297, C302, H304, and C310 together coordinate Zn(2+).

This sequence belongs to the TRAFAC class YlqF/YawG GTPase family. RsgA subfamily. As to quaternary structure, monomer. Associates with 30S ribosomal subunit, binds 16S rRNA. Requires Zn(2+) as cofactor.

It is found in the cytoplasm. Functionally, one of several proteins that assist in the late maturation steps of the functional core of the 30S ribosomal subunit. Helps release RbfA from mature subunits. May play a role in the assembly of ribosomal proteins into the subunit. Circularly permuted GTPase that catalyzes slow GTP hydrolysis, GTPase activity is stimulated by the 30S ribosomal subunit. This chain is Small ribosomal subunit biogenesis GTPase RsgA, found in Yersinia enterocolitica serotype O:8 / biotype 1B (strain NCTC 13174 / 8081).